The following is a 108-amino-acid chain: Tyrosine-protein phosphatase 5 (108 aa).

The Tyrosine-protein phosphatase domain maps to 1 to 108 (QESTVIVMLT…QGNNPSPIIV (108 aa)). Position 78 (aspartate 78) interacts with substrate.

Belongs to the protein-tyrosine phosphatase family.

The catalysed reaction is O-phospho-L-tyrosyl-[protein] + H2O = L-tyrosyl-[protein] + phosphate. The chain is Tyrosine-protein phosphatase 5 (STY-5) from Styela plicata (Wrinkled sea squirt).